Consider the following 394-residue polypeptide: Flavohemoprotein (394 aa).

The region spanning 1–136 is the Globin domain; sequence MLSENTINIV…LANVFIQREE (136 aa). Position 85 (H85) interacts with heme b. Active-site charge relay system residues include Y95 and E135. Positions 147-394 are reductase; that stretch reads GGWRGLREFE…YECFGPHKVV (248 aa). The FAD-binding FR-type domain occupies 150–255; the sequence is RGLREFELVE…AAPAGDFFLD (106 aa). Residues Y188 and 204 to 207 contribute to the FAD site; that span reads RQYS. An NADP(+)-binding site is contributed by 268 to 273; that stretch reads GVGLTP. 387 to 390 contributes to the FAD binding site; the sequence is CFGP.

It belongs to the globin family. Two-domain flavohemoproteins subfamily. This sequence in the C-terminal section; belongs to the flavoprotein pyridine nucleotide cytochrome reductase family. Heme b is required as a cofactor. It depends on FAD as a cofactor.

The catalysed reaction is 2 nitric oxide + NADPH + 2 O2 = 2 nitrate + NADP(+) + H(+). The enzyme catalyses 2 nitric oxide + NADH + 2 O2 = 2 nitrate + NAD(+) + H(+). In terms of biological role, is involved in NO detoxification in an aerobic process, termed nitric oxide dioxygenase (NOD) reaction that utilizes O(2) and NAD(P)H to convert NO to nitrate, which protects the bacterium from various noxious nitrogen compounds. Therefore, plays a central role in the inducible response to nitrosative stress. The chain is Flavohemoprotein from Vibrio vulnificus (strain YJ016).